Here is a 283-residue protein sequence, read N- to C-terminus: Putative cuticle collagen 79 (283 aa).

Positions 59–283 (FKQQSSPPSP…ARSISKVAIQ (225 aa)) are disordered. 3 triple-helical region regions span residues 94-122 (GPPG…ENGG), 139-201 (GPRG…PGRK), and 204-269 (GEAG…DGAY). Positions 137 to 146 (PPGPRGPPGP) are enriched in pro residues. The segment covering 226–240 (TDGDDGVDGQPGDEG) has biased composition (acidic residues). Low complexity predominate over residues 253-265 (PQGEQGTEGQPGT).

The protein belongs to the cuticular collagen family. Collagen polypeptide chains are complexed within the cuticle by disulfide bonds and other types of covalent cross-links.

Functionally, nematode cuticles are composed largely of collagen-like proteins. The cuticle functions both as an exoskeleton and as a barrier to protect the worm from its environment. The sequence is that of Putative cuticle collagen 79 (col-79) from Caenorhabditis elegans.